Consider the following 296-residue polypeptide: Ribosomal RNA small subunit methyltransferase A (296 aa).

S-adenosyl-L-methionine-binding residues include asparagine 31, leucine 33, glycine 58, glutamate 79, aspartate 104, and asparagine 129.

It belongs to the class I-like SAM-binding methyltransferase superfamily. rRNA adenine N(6)-methyltransferase family. RsmA subfamily.

Its subcellular location is the cytoplasm. It catalyses the reaction adenosine(1518)/adenosine(1519) in 16S rRNA + 4 S-adenosyl-L-methionine = N(6)-dimethyladenosine(1518)/N(6)-dimethyladenosine(1519) in 16S rRNA + 4 S-adenosyl-L-homocysteine + 4 H(+). In terms of biological role, specifically dimethylates two adjacent adenosines (A1518 and A1519) in the loop of a conserved hairpin near the 3'-end of 16S rRNA in the 30S particle. May play a critical role in biogenesis of 30S subunits. This is Ribosomal RNA small subunit methyltransferase A from Shouchella clausii (strain KSM-K16) (Alkalihalobacillus clausii).